An 86-amino-acid chain; its full sequence is MTRFVLFLNCFFLICMVVECKEGYLMGADGCKRSCLTRPGHYCANECSRVKGTDGYCYAWLACYCYNMPNWVKTWDRATNTCGRGK.

An N-terminal signal peptide occupies residues 1 to 20 (MTRFVLFLNCFFLICMVVEC). Positions 21–83 (KEGYLMGADG…TWDRATNTCG (63 aa)) constitute an LCN-type CS-alpha/beta domain. 4 disulfides stabilise this stretch: cysteine 31–cysteine 82, cysteine 35–cysteine 57, cysteine 43–cysteine 63, and cysteine 47–cysteine 65. An Arginine amide modification is found at arginine 84.

Expressed by the venom gland.

The protein resides in the secreted. Its function is as follows. Beta toxins bind voltage-independently at site-4 of sodium channels (Nav) and shift the voltage of activation toward more negative potentials thereby affecting sodium channel activation and promoting spontaneous and repetitive firing. The protein is Toxin Td2 of Tityus discrepans (Venezuelan scorpion).